We begin with the raw amino-acid sequence, 195 residues long: Fe/S biogenesis protein NfuA (195 aa).

Residues Cys152 and Cys155 each contribute to the [4Fe-4S] cluster site.

The protein belongs to the NfuA family. Homodimer. It depends on [4Fe-4S] cluster as a cofactor.

Functionally, involved in iron-sulfur cluster biogenesis. Binds a 4Fe-4S cluster, can transfer this cluster to apoproteins, and thereby intervenes in the maturation of Fe/S proteins. Could also act as a scaffold/chaperone for damaged Fe/S proteins. The protein is Fe/S biogenesis protein NfuA of Vibrio cholerae serotype O1 (strain ATCC 39541 / Classical Ogawa 395 / O395).